Here is a 119-residue protein sequence, read N- to C-terminus: Large ribosomal subunit protein uL14 (119 aa).

This sequence belongs to the universal ribosomal protein uL14 family. Part of the 50S ribosomal subunit. Forms a cluster with proteins L3 and L19. In the 70S ribosome, L14 and L19 interact and together make contacts with the 16S rRNA in bridges B5 and B8.

In terms of biological role, binds to 23S rRNA. Forms part of two intersubunit bridges in the 70S ribosome. This chain is Large ribosomal subunit protein uL14, found in Wolbachia pipientis wMel.